Consider the following 716-residue polypeptide: Epidermal growth factor receptor kinase substrate 8-like protein 1 (716 aa).

In terms of domain architecture, PTB spans 35–164; the sequence is QYHVNHLVTF…LQNYRSGRGE (130 aa). Disordered stretches follow at residues 175–194, 203–249, 404–472, 528–582, and 600–628; these read EELRRGASPAAETPPLQRRP, VEPS…GPEL, PGVE…ETES, YNIL…SLDP, and SRLAQGRSGPSRVTPGPRAQEPQLSPRSE. Phosphoserine is present on Ser182. Thr187 is modified (phosphothreonine). The span at 435 to 446 shows a compositional bias: basic and acidic residues; it reads PWEDPVEKQLQH. Residues 453 to 464 show a composition bias toward polar residues; it reads QSAPQVAVNGQQ. An SH3 domain is found at 477–536; the sequence is KARKWVLCNYDFQARNGSELSVKHRDVLEVLDDRRKWWKVRDHQGQEGYVPYNILTPHPG. Positions 553 to 563 are enriched in pro residues; sequence TPPPPPAPAPA. Residues 682-713 adopt a coiled-coil conformation; it reads VQRALLEDREKVSELEAVMEKQKKKVEGETKT.

This sequence belongs to the EPS8 family. As to quaternary structure, interacts with ABI1. Part of a complex that contains SOS1, ABI1 and EPS8L2. Associates with F-actin. Detected in placenta, skin, mammary gland, bone marrow and stomach.

The protein resides in the cytoplasm. Functionally, stimulates guanine exchange activity of SOS1. May play a role in membrane ruffling and remodeling of the actin cytoskeleton. The sequence is that of Epidermal growth factor receptor kinase substrate 8-like protein 1 (Eps8l1) from Mus musculus (Mouse).